Here is an 871-residue protein sequence, read N- to C-terminus: Zinc finger and BTB domain-containing protein 10 (871 aa).

Disordered regions lie at residues 1-156 and 177-228; these read MSFS…FNGR and GASL…AGEG. The segment covering 14-26 has biased composition (gly residues); that stretch reads RGGGLVTASGGGS. Residues 27–37 show a composition bias toward low complexity; sequence TNNNAGGEASA. Positions 39 to 56 are enriched in pro residues; the sequence is PPQPQPRQPPPPAPPALQ. Acidic residues predominate over residues 65-76; sequence EEVELEGLEPQD. The segment covering 77-103 has biased composition (low complexity); the sequence is LEASAGPAAGAAEEAKELLLPQDAGGP. Residue R126 is modified to Omega-N-methylarginine. The span at 126–135 shows a compositional bias: gly residues; the sequence is RGGGGGGLGN. S210 carries the post-translational modification Phosphoserine. K245 participates in a covalent cross-link: Glycyl lysine isopeptide (Lys-Gly) (interchain with G-Cter in SUMO2). The BTB domain occupies 364 to 433; the sequence is CDVSIVVSGK…LYSGNLVLTS (70 aa). Residues K468, K483, and K497 each participate in a glycyl lysine isopeptide (Lys-Gly) (interchain with G-Cter in SUMO2) cross-link. S565 bears the Phosphoserine mark. Glycyl lysine isopeptide (Lys-Gly) (interchain with G-Cter in SUMO2) cross-links involve residues K573, K672, K684, K696, and K706. 2 consecutive C2H2-type zinc fingers follow at residues 722-744 and 750-772; these read LKCPHCSYVAKYRRTLKRHLLIH and FSCDICGKLFTRREHVKRHSLVH. The segment at 812–871 is disordered; the sequence is SQPGGQEGVDQGQDTEFPRDEEYEENEVGEADEELVDDGEDQNDPSRWDESGEVCMSLDD. The span at 830–854 shows a compositional bias: acidic residues; that stretch reads RDEEYEENEVGEADEELVDDGEDQN.

The protein localises to the nucleus. Its function is as follows. May be involved in transcriptional regulation. In Homo sapiens (Human), this protein is Zinc finger and BTB domain-containing protein 10 (ZBTB10).